The sequence spans 336 residues: Anthranilate phosphoribosyltransferase (336 aa).

5-phospho-alpha-D-ribose 1-diphosphate is bound by residues Gly-82, 85-86 (GD), Thr-90, 92-95 (NIST), 110-118 (KHGNRSVSS), and Ser-122. Gly-82 provides a ligand contact to anthranilate. A Mg(2+)-binding site is contributed by Ser-94. Asn-113 provides a ligand contact to anthranilate. Position 168 (Arg-168) interacts with anthranilate. Residues Asp-227 and Glu-228 each coordinate Mg(2+).

This sequence belongs to the anthranilate phosphoribosyltransferase family. As to quaternary structure, homodimer. Mg(2+) is required as a cofactor.

It catalyses the reaction N-(5-phospho-beta-D-ribosyl)anthranilate + diphosphate = 5-phospho-alpha-D-ribose 1-diphosphate + anthranilate. It functions in the pathway amino-acid biosynthesis; L-tryptophan biosynthesis; L-tryptophan from chorismate: step 2/5. Catalyzes the transfer of the phosphoribosyl group of 5-phosphorylribose-1-pyrophosphate (PRPP) to anthranilate to yield N-(5'-phosphoribosyl)-anthranilate (PRA). The sequence is that of Anthranilate phosphoribosyltransferase from Leptospira interrogans serogroup Icterohaemorrhagiae serovar Lai (strain 56601).